Reading from the N-terminus, the 181-residue chain is Protein canopy homolog 1 (181 aa).

Positions 1-21 (MAILLHFGVLITAFLSSHVEG) are cleaved as a signal peptide. The Saposin B-type domain maps to 25 to 177 (PILYCGACRA…EETGLCKEYL (153 aa)). 3 cysteine pairs are disulfide-bonded: cysteine 29–cysteine 173, cysteine 32–cysteine 166, and cysteine 87–cysteine 139. A Prevents secretion from ER motif is present at residues 178 to 181 (HNEL).

The protein belongs to the canopy family.

It localises to the endoplasmic reticulum. Functionally, plays an role in early embryonic development. The protein is Protein canopy homolog 1 (cnpy1) of Xenopus laevis (African clawed frog).